A 96-amino-acid polypeptide reads, in one-letter code: MQALIEISDKQYLVQPGDELFIPRQQAEVGDVLDIKPMVAIDQENTTLQPSGNVQVKVLEHLKGEKVVVFKKKRRKRYQCRNGHRQQMTKVEVLSM.

It belongs to the bacterial ribosomal protein bL21 family. Part of the 50S ribosomal subunit. Contacts protein L20.

Its function is as follows. This protein binds to 23S rRNA in the presence of protein L20. The chain is Large ribosomal subunit protein bL21 from Prosthecochloris aestuarii (strain DSM 271 / SK 413).